The sequence spans 94 residues: Small ribosomal subunit protein bS20 (94 aa).

The protein belongs to the bacterial ribosomal protein bS20 family.

Binds directly to 16S ribosomal RNA. The polypeptide is Small ribosomal subunit protein bS20 (Symbiobacterium thermophilum (strain DSM 24528 / JCM 14929 / IAM 14863 / T)).